Here is a 328-residue protein sequence, read N- to C-terminus: UPF0194 membrane protein YE2891 (328 aa).

Residues 1 to 22 form the signal peptide; sequence MNRKKIIVAVVIVALLAAIGYG. Coiled-coil stretches lie at residues 80–109 and 139–208; these read YVNA…REEE and ANKA…TTLL.

Belongs to the UPF0194 family.

It localises to the periplasm. The sequence is that of UPF0194 membrane protein YE2891 from Yersinia enterocolitica serotype O:8 / biotype 1B (strain NCTC 13174 / 8081).